A 216-amino-acid chain; its full sequence is Elongation factor Ts (216 aa).

The segment at 81–84 (TDFV) is involved in Mg(2+) ion dislocation from EF-Tu.

It belongs to the EF-Ts family.

The protein resides in the cytoplasm. Its function is as follows. Associates with the EF-Tu.GDP complex and induces the exchange of GDP to GTP. It remains bound to the aminoacyl-tRNA.EF-Tu.GTP complex up to the GTP hydrolysis stage on the ribosome. The sequence is that of Elongation factor Ts from Geotalea daltonii (strain DSM 22248 / JCM 15807 / FRC-32) (Geobacter daltonii).